Consider the following 114-residue polypeptide: uncharacterized protein (114 aa).

One can recognise an HIT domain in the interval 6-114 (IFKNIIQRKI…LGGKKLKSFS (109 aa)).

This is an uncharacterized protein from Buchnera aphidicola subsp. Acyrthosiphon pisum (strain APS) (Acyrthosiphon pisum symbiotic bacterium).